The chain runs to 725 residues: MGALRWLSIAATASTALALNPEGLISAPRRSEAIPNPSGDVAVFSQSQYSFKTHKTTSQWNVLDLKSGDIKLLTNDSDVSEIVWLGSDDSTVLYVNGTNADIPGGVELWVSDISDFANGYKAASLPASFSGFKVVTTDSGDVRYVAYAESWANGTAYNEELVAKPLSSARIYDSIYVRHWDYYLTTRFNAVFSGTLKKSEGKGKATYKADGDLKNLVSPVKNAESPYPPFGGASDYDLSPDGKWVAFKSKAHDIPRANYTTAYIFLVPHDGSKTAVPINGPDSPGTPEGVKGDAGSPVFSPDSKKIAYWQMADESYEADHRTLYVYTVGSEETIPSLAADWDRSLDSVKWADDDNLIIGVEDAGRSRLFSIPADAGDDYKPKNFTDGGVVSAYYQLPDSTYLVTSTAIWTSWNVYIASPEKGVIKTLATANKIDPELKGLGPEIVDEFYYEGNWTKIQAFVIYPENFDKSKSYPLLYYIHGGPQSSWLDSWSTRWNPKVFADQGYVVVAPNPTGSSGFGDALQDAIQNQWGGYPYEDLVKGWEYVNENFDFIDTDNGVAAGASYGGFMINWIQGSDLGRKFKALVSHDGTFVADAKVSTEELWFMQHEFNGTFWDNRENYRRWDPSAPERILKFSTPMLIIHSDLDYRLPVSEGLSLFNILQERGVPSRFLNFPDENHWVQNKENSLVWHQQVLGWLNKYSGVEESNEDAVSLDNTVIPVVDYNP.

Residues 1–18 (MGALRWLSIAATASTALA) form the signal peptide. Residues Asn-75, Asn-96, Asn-153, Asn-258, Asn-383, and Asn-453 are each glycosylated (N-linked (GlcNAc...) asparagine). The active-site Charge relay system is the Ser-563. A glycan (N-linked (GlcNAc...) asparagine) is linked at Asn-610. Residues Asp-646 and His-678 each act as charge relay system in the active site.

It belongs to the peptidase S9C family.

Its subcellular location is the secreted. This chain is Dipeptidyl-peptidase 5, found in Aspergillus oryzae (strain ATCC 42149 / RIB 40) (Yellow koji mold).